A 436-amino-acid polypeptide reads, in one-letter code: 3-ketoacyl-CoA thiolase (436 aa).

The Acyl-thioester intermediate role is filled by cysteine 99. Active-site proton acceptor residues include histidine 392 and cysteine 422.

The protein belongs to the thiolase-like superfamily. Thiolase family. In terms of assembly, heterotetramer of two alpha chains (FadJ) and two beta chains (FadI).

The protein localises to the cytoplasm. It carries out the reaction an acyl-CoA + acetyl-CoA = a 3-oxoacyl-CoA + CoA. It functions in the pathway lipid metabolism; fatty acid beta-oxidation. In terms of biological role, catalyzes the final step of fatty acid oxidation in which acetyl-CoA is released and the CoA ester of a fatty acid two carbons shorter is formed. This Shewanella baltica (strain OS185) protein is 3-ketoacyl-CoA thiolase.